We begin with the raw amino-acid sequence, 87 residues long: Long neurotoxin LlLong (87 aa).

The N-terminal stretch at 1-20 is a signal peptide; that stretch reads KTLLLTLVVVTIICLDFGYT. Cystine bridges form between cysteine 23-cysteine 41, cysteine 34-cysteine 62, cysteine 47-cysteine 51, cysteine 66-cysteine 77, and cysteine 78-cysteine 83.

This sequence belongs to the three-finger toxin family. Long-chain subfamily. Type II alpha-neurotoxin sub-subfamily. As to expression, expressed by the venom gland.

The protein resides in the secreted. In terms of biological role, binds with high affinity to muscular (alpha-1/CHRNA1) and neuronal (alpha-7/CHRNA7) nicotinic acetylcholine receptor (nAChR) and inhibits acetylcholine from binding to the receptor, thereby impairing neuromuscular and neuronal transmission. This chain is Long neurotoxin LlLong, found in Laticauda laticaudata (Blue-ringed sea krait).